Here is a 99-residue protein sequence, read N- to C-terminus: Nucleoid-associated protein LCABL_24440 (99 aa).

It belongs to the YbaB/EbfC family. In terms of assembly, homodimer.

It localises to the cytoplasm. The protein resides in the nucleoid. Binds to DNA and alters its conformation. May be involved in regulation of gene expression, nucleoid organization and DNA protection. The sequence is that of Nucleoid-associated protein LCABL_24440 from Lacticaseibacillus casei (strain BL23) (Lactobacillus casei).